We begin with the raw amino-acid sequence, 347 residues long: NADH-ubiquinone oxidoreductase chain 2 (347 aa).

10 helical membrane-spanning segments follow: residues 13–33 (VILG…WIGF), 59–79 (YFFT…LNLM), 96–116 (MIMT…FWVP), 122–142 (IPLS…LTVL), 149–169 (INLT…GWGG), 178–198 (IMAY…IYNP), 200–220 (MTLL…MLFM), 240–260 (IVTI…LTGF), 276–296 (IILP…YMRL), and 325–345 (LLTP…MIII).

It belongs to the complex I subunit 2 family. In terms of assembly, core subunit of respiratory chain NADH dehydrogenase (Complex I) which is composed of 45 different subunits. Interacts with TMEM242.

The protein localises to the mitochondrion inner membrane. It carries out the reaction a ubiquinone + NADH + 5 H(+)(in) = a ubiquinol + NAD(+) + 4 H(+)(out). Functionally, core subunit of the mitochondrial membrane respiratory chain NADH dehydrogenase (Complex I) which catalyzes electron transfer from NADH through the respiratory chain, using ubiquinone as an electron acceptor. Essential for the catalytic activity and assembly of complex I. The protein is NADH-ubiquinone oxidoreductase chain 2 of Molossus ater (Black mastiff bat).